The following is a 120-amino-acid chain: NAD(P)H-quinone oxidoreductase subunit 3, chloroplastic (120 aa).

Transmembrane regions (helical) follow at residues 9 to 29 (IFWAFLIISSAIPFLAFLISG), 64 to 84 (MFALVFVVFDVETVFLYPWAM), and 88 to 108 (VLGVSAFIEAFVFVLILILGL).

Belongs to the complex I subunit 3 family. As to quaternary structure, NDH is composed of at least 16 different subunits, 5 of which are encoded in the nucleus.

The protein resides in the plastid. Its subcellular location is the chloroplast thylakoid membrane. It carries out the reaction a plastoquinone + NADH + (n+1) H(+)(in) = a plastoquinol + NAD(+) + n H(+)(out). The enzyme catalyses a plastoquinone + NADPH + (n+1) H(+)(in) = a plastoquinol + NADP(+) + n H(+)(out). In terms of biological role, NDH shuttles electrons from NAD(P)H:plastoquinone, via FMN and iron-sulfur (Fe-S) centers, to quinones in the photosynthetic chain and possibly in a chloroplast respiratory chain. The immediate electron acceptor for the enzyme in this species is believed to be plastoquinone. Couples the redox reaction to proton translocation, and thus conserves the redox energy in a proton gradient. This chain is NAD(P)H-quinone oxidoreductase subunit 3, chloroplastic, found in Aethionema grandiflorum (Persian stone-cress).